Consider the following 295-residue polypeptide: Putative aquaporin-12B (295 aa).

Topologically, residues 1-22 are cytoplasmic; that stretch reads MAGLNVSLSFFFATFTLCEAAR. A helical transmembrane segment spans residues 23–41; the sequence is RASKALLPVGAYEVFAREA. Residues 42-55 lie on the Extracellular side of the membrane; the sequence is MRTLVELGPWAGDF. A helical transmembrane segment spans residues 56–74; it reads GPDLLLTLLFLLFLAHGVT. The Cytoplasmic portion of the chain corresponds to 75–76; that stretch reads LD. An intramembrane region (discontinuously helical) is located at residues 77 to 114; that stretch reads GASANPTVSLQEFLMAEESLPGTLLKLAAQGLGMQAAC. An NPA 1 motif is present at residues 81–83; it reads NPT. Residues 115–120 lie on the Cytoplasmic side of the membrane; it reads TLTRLC. A helical transmembrane segment spans residues 121 to 142; sequence WAWELSDLHLLQSLMAQSCSSA. Residues 143–145 lie on the Extracellular side of the membrane; that stretch reads LRT. The chain crosses the membrane as a helical span at residues 146 to 166; sequence SVPHGALVEAACAFCFHLTLL. Residues 167–174 are Cytoplasmic-facing; it reads HLRHSPPA. The helical transmembrane segment at 175 to 191 threads the bilayer; that stretch reads YSGPAVALLVTVTAYTA. At 192–194 the chain is on the extracellular side; sequence GPF. An intramembrane region (discontinuously helical) is located at residues 195-206; that stretch reads TSAFFNPALAAS. Residues 200–202 carry the NPA 2 motif; that stretch reads NPA. At 207–223 the chain is on the extracellular side; the sequence is VTFACSGHTLLEYVQVY. The chain crosses the membrane as a helical span at residues 224 to 244; the sequence is WLGPLTGMVLAVLLHQGRLPH. At 245-295 the chain is on the cytoplasmic side; it reads LFQRNLFYGQKNKYRAPRGKPAPASGDTQTPAKGSSVREPGRSGVEGPHSS. Residues 257–295 form a disordered region; it reads KYRAPRGKPAPASGDTQTPAKGSSVREPGRSGVEGPHSS.

Belongs to the MIP/aquaporin (TC 1.A.8) family. AQP11/AQP12 subfamily. Homotetramer; each monomer provides an independent water pore.

The protein localises to the membrane. The catalysed reaction is H2O(in) = H2O(out). Putative aquaporin. Could form homotetrameric transmembrane channels, with each monomer independently mediating water transport across the plasma membrane along its osmotic gradient. In Homo sapiens (Human), this protein is Putative aquaporin-12B.